Here is a 248-residue protein sequence, read N- to C-terminus: Probable transcriptional regulatory protein Syncc9902_0542 (248 aa).

The protein belongs to the TACO1 family.

It is found in the cytoplasm. This chain is Probable transcriptional regulatory protein Syncc9902_0542, found in Synechococcus sp. (strain CC9902).